Consider the following 784-residue polypeptide: LPS-assembly protein LptD (784 aa).

The N-terminal stretch at 1-24 is a signal peptide; the sequence is MKKRIPTLLATMIASALYSHQGLA. 2 disulfide bridges follow: Cys31–Cys724 and Cys173–Cys725.

It belongs to the LptD family. In terms of assembly, component of the lipopolysaccharide transport and assembly complex. Interacts with LptE and LptA. In terms of processing, contains two intramolecular disulfide bonds.

It localises to the cell outer membrane. Together with LptE, is involved in the assembly of lipopolysaccharide (LPS) at the surface of the outer membrane. This chain is LPS-assembly protein LptD, found in Salmonella paratyphi A (strain ATCC 9150 / SARB42).